A 478-amino-acid chain; its full sequence is Zinc metalloproteinase/disintegrin ussurin (478 aa).

A signal peptide spans 1–20; the sequence is MIQVLLVTICLAAFPYQGSS. Positions 21–190 are excised as a propeptide; it reads IILESGNVND…KKASPLVVTT (170 aa). The region spanning 193–389 is the Peptidase M12B domain; that stretch reads RYVELVVVAD…RNPQCILNKP (197 aa). Residues Glu196 and Asp280 each coordinate Ca(2+). 3 disulfide bridges follow: Cys304–Cys384, Cys344–Cys368, and Cys346–Cys351. Zn(2+) is bound at residue His329. Glu330 is a catalytic residue. Residues His333 and His339 each contribute to the Zn(2+) site. Cys384 and Asn387 together coordinate Ca(2+). Positions 390 to 413 are excised as a propeptide; it reads LRTDIVSTPVSGNELLEAGEECDC. A Disintegrin domain is found at 397–478; the sequence is TPVSGNELLE…AGCPRNPFHA (82 aa). Cystine bridges form between Cys411–Cys426, Cys413–Cys421, Cys420–Cys443, Cys434–Cys440, Cys439–Cys464, and Cys452–Cys471. Residues 456–458 carry the Cell attachment site motif; that stretch reads RGD.

It belongs to the venom metalloproteinase (M12B) family. P-II subfamily. P-IIa sub-subfamily. As to quaternary structure, monomer. It depends on Zn(2+) as a cofactor. As to expression, expressed by the venom gland.

The protein localises to the secreted. Impairs hemostasis in the envenomed animal. In terms of biological role, inhibits platelet aggregation induced by ADP, thrombin, platelet-activating factor and collagen. Acts by inhibiting fibrinogen interaction with platelet receptors GPIIb/GPIIIa (ITGA2B/ITGB3). This chain is Zinc metalloproteinase/disintegrin ussurin, found in Gloydius ussuriensis (Ussuri mamushi).